The following is a 181-amino-acid chain: ADP-ribosylation factor 1-like 2 (181 aa).

Gly2 carries N-myristoyl glycine lipidation. Residues 3–16 are important for the stable binding to the membranes; sequence NVFGSLFKGLFGKK. GTP-binding positions include 24-32, 126-129, and Ala160; these read GLDAAGKTT and NKQD.

It belongs to the small GTPase superfamily. Arf family.

It is found in the golgi apparatus membrane. The enzyme catalyses GTP + H2O = GDP + phosphate + H(+). With respect to regulation, alternates between an inactive GDP-bound form and an active GTP-bound form. Activated by a guanine nucleotide-exchange factor (GEF) and inactivated by GTPase-activating protein (GAP). Small GTPase involved in protein trafficking between different compartments. Modulates vesicle budding and uncoating within the Golgi complex. In its GTP-bound form, triggers the recruitment of coatomer proteins to the Golgi membrane. The hydrolysis of ARF1-bound GTP, which is mediated by ARFGAPs proteins, is required for dissociation of coat proteins from Golgi membranes and vesicles. Involved in endoplasmic reticulum dynamics during embryogenesis. Also required for adult germline function. Plays a role in cell shedding during embryogenesis probably by promoting the endocytosis of cell adhesion molecules. During neurogenesis, involved in cell autonomous Q.p neuroblast asymmetric divisions that generate one precursor cell and one apoptotic cell, probably by controlling endocytosis. Plays a role in maintaining mitochondrial morphology. The chain is ADP-ribosylation factor 1-like 2 (arf-1.2) from Caenorhabditis briggsae.